A 141-amino-acid polypeptide reads, in one-letter code: MELPKPQTVQQLSDKLTVPVEDLLLPCRFCNSFLTYIELREFDYKNLQLIWTQEDFVFACCSSCAYASAQYECQQFYELTVFGREIEQVEQQTIGLIVIRCQYCLKCLDLIEKLDICCSHQAFHKVRGNWKGRCRHCKAIE.

2 zinc fingers span residues 27 to 64 (CRFC…CSSC) and 101 to 137 (CQYC…CRHC).

This sequence belongs to the papillomaviridae E6 protein family. Forms homodimers. Interacts with ubiquitin-protein ligase UBE3A/E6-AP; this interaction stimulates UBE3A ubiquitin activity. Interacts with host BAK1.

It localises to the host cytoplasm. Its subcellular location is the host nucleus. Functionally, plays a major role in the induction and maintenance of cellular transformation. E6 associates with host UBE3A/E6-AP ubiquitin-protein ligase and modulates its activity. Protects host keratinocytes from apoptosis by mediating the degradation of host BAK1. May also inhibit host immune response. This chain is Protein E6, found in Homo sapiens (Human).